The primary structure comprises 147 residues: Large ribosomal subunit protein bL9 (147 aa).

It belongs to the bacterial ribosomal protein bL9 family.

Binds to the 23S rRNA. The protein is Large ribosomal subunit protein bL9 of Clostridium botulinum (strain Alaska E43 / Type E3).